Consider the following 202-residue polypeptide: MLVAGFLLALPPSWAAGAPRAGRRPARPRGCADRPEELLEQLYGRLAAGVLSAFHHTLQLGPREQARNASCPAGGRPADRRFRPPTNLRSVSPWAYRISYDPARYPRYLPEAYCLCRGCLTGLFGEEDVRFRSAPVYMPTVVLRRTPACAGGRSVYTEAYVTIPVGCTCVPEPEKDADSINSSIDKQGAKLLLGPNDAPAGP.

A signal peptide spans 1–15 (MLVAGFLLALPPSWA). Residues 65–85 (QARNASCPAGGRPADRRFRPP) are disordered. Residues asparagine 68 and asparagine 181 are each glycosylated (N-linked (GlcNAc...) asparagine).

This sequence belongs to the IL-17 family. In terms of tissue distribution, expressed preferentially in adipose, skeletal muscle and CNS.

It is found in the secreted. Functionally, induces expression of IL6, CXCL8/IL8, and CSF2/GM-CSF from endothelial cells. In Homo sapiens (Human), this protein is Interleukin-17D (IL17D).